We begin with the raw amino-acid sequence, 470 residues long: Auxin transporter-like protein 3 (470 aa).

The Cytoplasmic portion of the chain corresponds to 1 to 57 (MAAEKIETVVAGNYLEMEREEENISGNKKSSTKTKLSNFFWHGGSVYDAWFSCASNQ). The chain crosses the membrane as a helical span at residues 58 to 75 (VAQVLLTLPYSFSQLGMM). Over 76-77 (SG) the chain is Extracellular. The helical transmembrane segment at 78–98 (ILFQLFYGLMGSWTAYLISVL) threads the bilayer. Topologically, residues 99 to 134 (YVEYRTRKEREKFDFRNHVIQWFEVLDGLLGKHWRN) are cytoplasmic. Residues 135 to 155 (LGLIFNCTFLLFGSVIQLIAC) traverse the membrane as a helical segment. Topologically, residues 156-170 (ASNIYYINDKLDKRT) are extracellular. Residues 171-191 (WTYIFGACCATTVFIPSFHNY) form a helical membrane-spanning segment. A topological domain (cytoplasmic) is located at residue Arg192. The chain crosses the membrane as a helical span at residues 193–213 (IWSFLGLAMTTYTSWYLTIAS). The Extracellular portion of the chain corresponds to 214-230 (LLHGQAEDVKHSGPTTM). The helical transmembrane segment at 231-251 (VLYFTGATNILYTFGGHAVTV) threads the bilayer. Residues 252–264 (EIMHAMWKPQKFK) lie on the Cytoplasmic side of the membrane. Residues 265–285 (AIYLLATIYVLTLTLPSASAV) form a helical membrane-spanning segment. Residues 286–312 (YWAFGDKLLTHSNALSLLPKTGFRDTA) are Extracellular-facing. The chain crosses the membrane as a helical span at residues 313-333 (VILMLIHQFITFGFASTPLYF). Residues 334-354 (VWEKLIGVHETKSMFKRAMAR) lie on the Cytoplasmic side of the membrane. A helical transmembrane segment spans residues 355 to 375 (LPVVVPIWFLAIIFPFFGPIN). A topological domain (extracellular) is located at residue Ser376. Residues 377 to 397 (AVGSLLVSFTVYIIPALAHML) traverse the membrane as a helical segment. The Cytoplasmic portion of the chain corresponds to 398-426 (TFAPAPSRENAVERPPRVVGGWMGTYCIN). The chain crosses the membrane as a helical span at residues 427-447 (IFVVVWVFVVGFGFGGWASMV). Residues 448 to 470 (NFVRQIDTFGLFTKCYQCPPHKP) are Extracellular-facing.

Belongs to the amino acid/polyamine transporter 2 family. Amino acid/auxin permease (AAAP) (TC 2.A.18.1) subfamily.

It is found in the cell membrane. Functionally, carrier protein involved in proton-driven auxin influx. Mediates the formation of auxin gradient from developing leaves (site of auxin biosynthesis) to tips by contributing to the loading of auxin in vascular tissues and facilitating acropetal (base to tip) auxin transport within inner tissues of the root apex, and basipetal (tip to base) auxin transport within outer tissues of the root apex. This chain is Auxin transporter-like protein 3 (LAX3), found in Arabidopsis thaliana (Mouse-ear cress).